Consider the following 636-residue polypeptide: 1-deoxy-D-xylulose-5-phosphate synthase (636 aa).

Thiamine diphosphate contacts are provided by residues His74 and 115 to 117 (AHS). Asp146 contributes to the Mg(2+) binding site. Thiamine diphosphate is bound by residues 147–148 (GS), Asn176, Tyr287, and Glu369. Residue Asn176 participates in Mg(2+) binding.

The protein belongs to the transketolase family. DXPS subfamily. In terms of assembly, homodimer. Mg(2+) is required as a cofactor. It depends on thiamine diphosphate as a cofactor.

The catalysed reaction is D-glyceraldehyde 3-phosphate + pyruvate + H(+) = 1-deoxy-D-xylulose 5-phosphate + CO2. It participates in metabolic intermediate biosynthesis; 1-deoxy-D-xylulose 5-phosphate biosynthesis; 1-deoxy-D-xylulose 5-phosphate from D-glyceraldehyde 3-phosphate and pyruvate: step 1/1. Its function is as follows. Catalyzes the acyloin condensation reaction between C atoms 2 and 3 of pyruvate and glyceraldehyde 3-phosphate to yield 1-deoxy-D-xylulose-5-phosphate (DXP). This Polaromonas naphthalenivorans (strain CJ2) protein is 1-deoxy-D-xylulose-5-phosphate synthase.